The sequence spans 178 residues: Fatty-acid and retinol-binding protein 1 (178 aa).

The first 16 residues, 1–16 (MYHQLILLALIGTIMA), serve as a signal peptide directing secretion. Coiled coils occupy residues 67-89 (DAAL…ELRN) and 129-154 (IKQA…LKVT).

Belongs to the fatty-acid and retinol-binding protein (FARBP) family. Post-translationally, not glycosylated.

The protein resides in the secreted. Functionally, binds retinol and different fatty acids. The sequence is that of Fatty-acid and retinol-binding protein 1 from Loa loa (Eye worm).